The sequence spans 129 residues: Acetophenone carboxylase beta subunit (129 aa).

As to quaternary structure, acetophenone carboxylase consists of five subunits; a heterooctameric subcomplex of two alpha (Apc1), two beta (Apc2), two gamma (Apc3) and two delta (Apc4) subunits assembles with the epsilon (Apc5) subunit in an unknown stoichiometry. Mg(2+) is required as a cofactor. It depends on Mn(2+) as a cofactor.

It is found in the cytoplasm. It catalyses the reaction acetophenone + hydrogencarbonate + 2 ATP + H2O = 3-oxo-3-phenylpropanoate + 2 ADP + 2 phosphate + 2 H(+). Its activity is regulated as follows. Inhibited by zinc ions, carbamoylphosphate and beta,gamma-imido-ATP. Its function is as follows. Catalyzes the carboxylation of acetophenone to form 3-oxo-3-phenylpropanoate (benzoylacetate) in the anaerobic catabolism of ethylbenzene. Also carboxylates propiophenone at the same rate and 4-acetyl-pyridine at lower rates. This is Acetophenone carboxylase beta subunit (apc2) from Aromatoleum aromaticum (strain DSM 19018 / LMG 30748 / EbN1) (Azoarcus sp. (strain EbN1)).